The following is a 146-amino-acid chain: Hemoglobin subunit beta (146 aa).

Val-1 carries the N-acetylvaline modification. The Globin domain maps to 2–146; the sequence is HLTGEEKSTV…VATALAHKYH (145 aa). Phosphoserine is present on Ser-44. N6-acetyllysine is present on Lys-59. Heme b is bound at residue His-63. Lys-82 is subject to N6-acetyllysine. His-92 contributes to the heme b binding site. Cys-93 bears the S-nitrosocysteine mark. An N6-acetyllysine modification is found at Lys-144.

Belongs to the globin family. In terms of assembly, heterotetramer of two alpha chains and two beta chains. Red blood cells.

In terms of biological role, involved in oxygen transport from the lung to the various peripheral tissues. In Macrotus californicus (Californian leaf-nosed bat), this protein is Hemoglobin subunit beta (HBB).